We begin with the raw amino-acid sequence, 126 residues long: Glycine cleavage system H protein (126 aa).

Positions 22-104 (KLRIGITDFA…YEKAWMIVIE (83 aa)) constitute a Lipoyl-binding domain. K63 carries the N6-lipoyllysine modification.

The protein belongs to the GcvH family. As to quaternary structure, the glycine cleavage system is composed of four proteins: P, T, L and H. It depends on (R)-lipoate as a cofactor.

Its function is as follows. The glycine cleavage system catalyzes the degradation of glycine. The H protein shuttles the methylamine group of glycine from the P protein to the T protein. Is also involved in protein lipoylation via its role as an octanoyl/lipoyl carrier protein intermediate. The chain is Glycine cleavage system H protein from Oceanobacillus iheyensis (strain DSM 14371 / CIP 107618 / JCM 11309 / KCTC 3954 / HTE831).